Here is an 87-residue protein sequence, read N- to C-terminus: UPF0250 protein CKO_02527 (87 aa).

It belongs to the UPF0250 family.

This is UPF0250 protein CKO_02527 from Citrobacter koseri (strain ATCC BAA-895 / CDC 4225-83 / SGSC4696).